Consider the following 664-residue polypeptide: UvrABC system protein B (664 aa).

The region spanning 25-170 (NSILLGNKYQ…FVGQRISIKE (146 aa)) is the Helicase ATP-binding domain. 38–45 (GVTGSGKT) serves as a coordination point for ATP. Positions 91–114 (YYDYYQPESYVPSKDLFIEKEATI) match the Beta-hairpin motif. One can recognise a Helicase C-terminal domain in the interval 429-595 (QMEDLYIEIQ…TIVKKIQNIL (167 aa)). Residues 622-657 (KKLIDKLKFELEEAVNDERFEDAIVLRDKIKELGSK) form the UVR domain.

The protein belongs to the UvrB family. As to quaternary structure, forms a heterotetramer with UvrA during the search for lesions. Interacts with UvrC in an incision complex.

It localises to the cytoplasm. Functionally, the UvrABC repair system catalyzes the recognition and processing of DNA lesions. A damage recognition complex composed of 2 UvrA and 2 UvrB subunits scans DNA for abnormalities. Upon binding of the UvrA(2)B(2) complex to a putative damaged site, the DNA wraps around one UvrB monomer. DNA wrap is dependent on ATP binding by UvrB and probably causes local melting of the DNA helix, facilitating insertion of UvrB beta-hairpin between the DNA strands. Then UvrB probes one DNA strand for the presence of a lesion. If a lesion is found the UvrA subunits dissociate and the UvrB-DNA preincision complex is formed. This complex is subsequently bound by UvrC and the second UvrB is released. If no lesion is found, the DNA wraps around the other UvrB subunit that will check the other stand for damage. The chain is UvrABC system protein B from Borreliella afzelii (strain PKo) (Borrelia afzelii).